The following is a 243-amino-acid chain: Orotidine 5'-phosphate decarboxylase (243 aa).

Substrate contacts are provided by residues Asp-19, Lys-41, 69–78, Thr-124, Arg-185, Gln-194, Gly-214, and Arg-215; that span reads DLKFFDIPAT. Lys-71 (proton donor) is an active-site residue.

The protein belongs to the OMP decarboxylase family. Type 1 subfamily. In terms of assembly, homodimer.

The enzyme catalyses orotidine 5'-phosphate + H(+) = UMP + CO2. Its pathway is pyrimidine metabolism; UMP biosynthesis via de novo pathway; UMP from orotate: step 2/2. Catalyzes the decarboxylation of orotidine 5'-monophosphate (OMP) to uridine 5'-monophosphate (UMP). This is Orotidine 5'-phosphate decarboxylase from Xanthomonas campestris pv. campestris (strain B100).